A 134-amino-acid polypeptide reads, in one-letter code: MPSADTEFIRVIRIKSANGSEKMLEIPAKLDLERPKRPRTVFTDEQLEKLEESFNTSGYLSGSTRAKLAESLGLSDNQVKVWFQNRRTKQKKIDSRDPIKPETLKPAENYQNVYQNYQNYWTAAAFLSNNVISS.

Residues 35–94 constitute a DNA-binding region (homeobox); the sequence is PKRPRTVFTDEQLEKLEESFNTSGYLSGSTRAKLAESLGLSDNQVKVWFQNRRTKQKKID.

The protein localises to the nucleus. In Caenorhabditis elegans, this protein is Homeobox protein ceh-5 (ceh-5).